Consider the following 170-residue polypeptide: NADH-quinone oxidoreductase subunit B (170 aa).

Cys46, Cys47, Cys111, and Cys141 together coordinate [4Fe-4S] cluster.

The protein belongs to the complex I 20 kDa subunit family. NDH-1 is composed of 14 different subunits. Subunits NuoB, C, D, E, F, and G constitute the peripheral sector of the complex. [4Fe-4S] cluster serves as cofactor.

The protein resides in the cell membrane. It catalyses the reaction a quinone + NADH + 5 H(+)(in) = a quinol + NAD(+) + 4 H(+)(out). Functionally, NDH-1 shuttles electrons from NADH, via FMN and iron-sulfur (Fe-S) centers, to quinones in the respiratory chain. The immediate electron acceptor for the enzyme in this species is believed to be a menaquinone. Couples the redox reaction to proton translocation (for every two electrons transferred, four hydrogen ions are translocated across the cytoplasmic membrane), and thus conserves the redox energy in a proton gradient. The polypeptide is NADH-quinone oxidoreductase subunit B (Geobacillus sp. (strain WCH70)).